Consider the following 145-residue polypeptide: Mediator of RNA polymerase II transcription subunit 21 (145 aa).

Positions 79–112 form a coiled coil; sequence EESTAALQAASLRQLEEENQEAAARLEEVVYRGD.

It belongs to the Mediator complex subunit 21 family. In terms of assembly, component of the Mediator complex.

The protein resides in the nucleus. Its function is as follows. Component of the Mediator complex, a coactivator involved in the regulated transcription of nearly all RNA polymerase II-dependent genes. Mediator functions as a bridge to convey information from gene-specific regulatory proteins to the basal RNA polymerase II transcription machinery. Mediator is recruited to promoters by direct interactions with regulatory proteins and serves as a scaffold for the assembly of a functional preinitiation complex with RNA polymerase II and the general transcription factors. This chain is Mediator of RNA polymerase II transcription subunit 21 (med21), found in Danio rerio (Zebrafish).